We begin with the raw amino-acid sequence, 363 residues long: NAD(P)H-quinone oxidoreductase subunit 1, chloroplastic (363 aa).

The next 6 membrane-spanning stretches (helical) occupy residues 28–48, 98–118, 129–149, 253–273, 300–320, and 336–356; these read WVFV…LAIV, FSFG…VIPF, IGVF…LMSG, FGLF…FVTV, VFVT…FIFV, and LLNL…LLTT.

The protein belongs to the complex I subunit 1 family. NDH is composed of at least 16 different subunits, 5 of which are encoded in the nucleus.

Its subcellular location is the plastid. The protein localises to the chloroplast thylakoid membrane. The catalysed reaction is a plastoquinone + NADH + (n+1) H(+)(in) = a plastoquinol + NAD(+) + n H(+)(out). The enzyme catalyses a plastoquinone + NADPH + (n+1) H(+)(in) = a plastoquinol + NADP(+) + n H(+)(out). Its function is as follows. NDH shuttles electrons from NAD(P)H:plastoquinone, via FMN and iron-sulfur (Fe-S) centers, to quinones in the photosynthetic chain and possibly in a chloroplast respiratory chain. The immediate electron acceptor for the enzyme in this species is believed to be plastoquinone. Couples the redox reaction to proton translocation, and thus conserves the redox energy in a proton gradient. This chain is NAD(P)H-quinone oxidoreductase subunit 1, chloroplastic, found in Phaseolus vulgaris (Kidney bean).